A 292-amino-acid chain; its full sequence is Protoheme IX farnesyltransferase (292 aa).

The next 9 helical transmembrane spans lie at 12–32 (ITWL…PQAS), 43–63 (LLRL…TAAL), 94–114 (LAFG…GVNL), 115–135 (LSAG…TPMK), 144–164 (VGAI…AGGL), 169–189 (WVLF…IAWM), 216–236 (IVIY…LGMS), 239–259 (LYLV…VRVA), and 267–287 (ARGV…LMLL).

Belongs to the UbiA prenyltransferase family. Protoheme IX farnesyltransferase subfamily.

It is found in the cell inner membrane. The catalysed reaction is heme b + (2E,6E)-farnesyl diphosphate + H2O = Fe(II)-heme o + diphosphate. The protein operates within porphyrin-containing compound metabolism; heme O biosynthesis; heme O from protoheme: step 1/1. Its function is as follows. Converts heme B (protoheme IX) to heme O by substitution of the vinyl group on carbon 2 of heme B porphyrin ring with a hydroxyethyl farnesyl side group. This Solibacter usitatus (strain Ellin6076) protein is Protoheme IX farnesyltransferase.